The chain runs to 20 residues: Citrate synthase (20 aa).

This sequence belongs to the citrate synthase family. Homodimer.

It catalyses the reaction oxaloacetate + acetyl-CoA + H2O = citrate + CoA + H(+). The protein operates within carbohydrate metabolism; tricarboxylic acid cycle; isocitrate from oxaloacetate: step 1/2. This chain is Citrate synthase, found in Populus euphratica (Euphrates poplar).